Here is a 132-residue protein sequence, read N- to C-terminus: MSKTLNIIWQYLRAFVLIYACLYAGIFIASLLPVTIPGSIIGMLILFVLLALQILPAKWVNPGCYVLIRYMALLFVPIGVGVMQYFDLLRAQFGPVVVSCAISTLVVFLVMSWSSQLVHGERKVVGQKGSEE.

The next 4 membrane-spanning stretches (helical) occupy residues 7-27 (IIWQ…AGIF), 31-51 (LLPV…VLLA), 63-83 (GCYV…VGVM), and 93-113 (FGPV…VMSW).

The protein belongs to the UPF0299 family.

The protein localises to the cell inner membrane. This chain is UPF0299 membrane protein YohJ, found in Shigella dysenteriae serotype 1 (strain Sd197).